A 370-amino-acid polypeptide reads, in one-letter code: Death-associated protein kinase 2 (370 aa).

The Protein kinase domain occupies 23–285; the sequence is YDIGEELGSG…IQEALRHPWI (263 aa). ATP-binding positions include 29–37 and Lys52; that span reads LGSGQFAIV. The active-site Proton acceptor is the Asp149. Residues 277–344 form a calmodulin-binding region; sequence QEALRHPWIT…KVHLRPDEDL (68 aa). Residues 292-301 form an autoinhibitory domain region; sequence QAMVRRESVV. A Phosphoserine modification is found at Ser299. Ser318 is subject to Phosphoserine; by autocatalysis. The interval 348 to 370 is disordered; it reads ESDTEEDIARRKALHPRRRSSTS. Ser349 is modified (phosphoserine). Basic residues predominate over residues 358 to 370; it reads RKALHPRRRSSTS. Thr369 carries the phosphothreonine; by PKB/AKT1 modification.

It belongs to the protein kinase superfamily. CAMK Ser/Thr protein kinase family. DAP kinase subfamily. As to quaternary structure, homodimer in its autoinhibited state. Active as monomer. Isoform 2 but not isoform 1 can interact with ATF4. Interacts with 14-3-3 proteins YWHAB, YWHAE, YWHAG, YWHAH, YWHAQ, YWHAZ and SFN; the interaction requires DAPK2 phosphorylation at Thr-369 and suppresses DAPK2 kinase activity and DAPK2-induced apoptosis. Requires Mg(2+) as cofactor. In terms of processing, autophosphorylation at Ser-318 inhibits its catalytic activity. Dephosphorylated at Ser-318 in response to activated Fas and TNF-alpha receptors. As to expression, expressed in neutrophils and eosinophils. Isoform 2 is expressed in embryonic stem cells (at protein level). Isoform 1 is ubiquitously expressed in all tissue types examined with high levels in heart, lung and skeletal muscle.

The protein localises to the cytoplasm. The protein resides in the cytoplasmic vesicle. It localises to the autophagosome lumen. It catalyses the reaction L-seryl-[protein] + ATP = O-phospho-L-seryl-[protein] + ADP + H(+). The catalysed reaction is L-threonyl-[protein] + ATP = O-phospho-L-threonyl-[protein] + ADP + H(+). With respect to regulation, activated by Ca(2+)/calmodulin. Regulated by a double locking mechanism, involving autophosphorylation at Ser-318, calmodulin binding, and dimerization. In the inactive state, Ser-318 is phosphorylated, and the kinase is dimeric. Activation involves: dephosphorylation at Ser-318, release-of-autoinhibition mechanism where calmodulin binding induces a conformational change that relieves the steric block of the active site by the autoinhibitory domain, and generation of the monomeric active form of the kinase. Functionally, calcium/calmodulin-dependent serine/threonine kinase involved in multiple cellular signaling pathways that trigger cell survival, apoptosis, and autophagy. Regulates both type I apoptotic and type II autophagic cell death signals, depending on the cellular setting. The former is caspase-dependent, while the latter is caspase-independent and is characterized by the accumulation of autophagic vesicles. Acts as a mediator of anoikis and a suppressor of beta-catenin-dependent anchorage-independent growth of malignant epithelial cells. May play a role in granulocytic maturation. Regulates granulocytic motility by controlling cell spreading and polarization. Its function is as follows. Isoform 2 is not regulated by calmodulin. It can phosphorylate MYL9. It can induce membrane blebbing and autophagic cell death. The protein is Death-associated protein kinase 2 (DAPK2) of Homo sapiens (Human).